We begin with the raw amino-acid sequence, 314 residues long: Acetaldehyde dehydrogenase 1/2 (314 aa).

Position 12-15 (S12–I15) interacts with NAD(+). C130 serves as the catalytic Acyl-thioester intermediate. NAD(+) contacts are provided by residues S161–N169 and N288.

This sequence belongs to the acetaldehyde dehydrogenase family.

It catalyses the reaction acetaldehyde + NAD(+) + CoA = acetyl-CoA + NADH + H(+). This Rhizorhabdus wittichii (strain DSM 6014 / CCUG 31198 / JCM 15750 / NBRC 105917 / EY 4224 / RW1) (Sphingomonas wittichii) protein is Acetaldehyde dehydrogenase 1/2.